Reading from the N-terminus, the 658-residue chain is NADH-ubiquinone oxidoreductase chain 5 (658 aa).

A run of 17 helical transmembrane segments spans residues 4-23 (TLIV…GRKI), 30-52 (IITC…EVGI), 81-103 (LTVS…SISY), 112-129 (RFFS…ILVT), 133-155 (YLLM…NFWF), 168-190 (LLTN…WSFG), 200-222 (LAPY…GATA), 243-262 (VSAL…LLMR), 272-294 (TVLI…IGLF), 301-319 (VIAY…GIGL), 329-351 (LVNH…HSVA), 364-386 (PFLP…VPFM), 409-431 (IVYF…VLYL), 452-471 (LFLN…FGFL), 505-527 (VPVL…SILY), 607-629 (LSTG…YIST), and 639-656 (LLIL…NKLL).

It belongs to the complex I subunit 5 family.

It localises to the mitochondrion inner membrane. The catalysed reaction is a ubiquinone + NADH + 5 H(+)(in) = a ubiquinol + NAD(+) + 4 H(+)(out). In terms of biological role, core subunit of the mitochondrial membrane respiratory chain NADH dehydrogenase (Complex I) that is believed to belong to the minimal assembly required for catalysis. Complex I functions in the transfer of electrons from NADH to the respiratory chain. The immediate electron acceptor for the enzyme is believed to be ubiquinone. This is NADH-ubiquinone oxidoreductase chain 5 (nad5) from Talaromyces marneffei (Penicillium marneffei).